A 111-amino-acid polypeptide reads, in one-letter code: Toxin 3FTx-Tri2 (111 aa).

An N-terminal signal peptide occupies residues 1-19; the sequence is MKTLLLALVVLAFVCLGSA. Positions 20–34 are excised as a propeptide; that stretch reads DQVGLGKEQIDRGRR. Glutamine 35 carries the pyrrolidone carboxylic acid modification. 5 disulfides stabilise this stretch: cysteine 44-cysteine 68, cysteine 47-cysteine 55, cysteine 61-cysteine 87, cysteine 91-cysteine 102, and cysteine 103-cysteine 108.

This sequence belongs to the three-finger toxin family. Ancestral subfamily. Boigatoxin sub-subfamily. As to expression, expressed by the venom gland.

The protein resides in the secreted. Potent postsynaptic neurotoxin. Displays readily reversible competitive antagonism at the nicotinic acetylcholine receptor (nAChR). This Trimorphodon biscutatus (Western lyre snake) protein is Toxin 3FTx-Tri2.